The chain runs to 563 residues: Nigrin b (563 aa).

A signal peptide spans 1-25 (MRVVAAAMLYFYIVVLAICSVGIQG). Glutamate 188 is a catalytic residue. Asparagine 221 carries N-linked (GlcNAc...) asparagine glycosylation. 3 disulfides stabilise this stretch: cysteine 274/cysteine 302, cysteine 319/cysteine 338, and cysteine 360/cysteine 377. 2 Ricin B-type lectin domains span residues 305–431 (RTSF…WTVT) and 434–559 (VKPI…WVTQ). One copy of the 1-alpha repeat lies at 316–356 (DGLCVDVRNGYDTDGTPLQLWPCGTQRNQRWTFDSDDTIRS). Residues 357-397 (MGKCMTANGLNNGSNIVIFNCSTAAENAIKWEVPIDGSIIN) form a 1-beta repeat. Residues asparagine 368 and asparagine 376 are each glycosylated (N-linked (GlcNAc...) asparagine). The 1-gamma repeat unit spans residues 400–432 (SGLVMTAPRAASRTILLLEDNIYAASQGWTVTN). The stretch at 445 to 482 (KEMCLQSNGENNGVWMEDCEATSLQQQWALYGDRTIRV) is one 2-alpha repeat. Cysteine 448 and cysteine 463 form a disulfide bridge. An N-linked (GlcNAc...) asparagine glycan is attached at asparagine 483. Residues 486-524 (RGLCVTTNGYNSKDLIIILKCQGLPSQRWFFNSDGAIVN) form a 2-beta repeat. Cysteine 489 and cysteine 506 are disulfide-bonded. A 2-gamma repeat occupies 527–554 (SRHVMDVRASNVSLREIIIFPATGNPNQ). Asparagine 537 carries an N-linked (GlcNAc...) asparagine glycan.

In the N-terminal section; belongs to the ribosome-inactivating protein family. Type 2 RIP subfamily. In terms of assembly, disulfide-linked dimer of A and B chains.

The catalysed reaction is Endohydrolysis of the N-glycosidic bond at one specific adenosine on the 28S rRNA.. Its function is as follows. Non-toxic type 2 RIP which strongly inhibits mammalian protein synthesis but does not affect plant nor bacterial protein synthesis. The A chain is responsible for inhibiting protein synthesis through the catalytic inactivation of 60S ribosomal subunits by removing adenine from position 4,324 of 28S rRNA. In terms of biological role, the B chain is a galactose-specific lectin that facilitates the binding of nigrin b to the cell membrane that precedes endocytosis. The protein is Nigrin b of Sambucus nigra (European elder).